The primary structure comprises 1413 residues: Zinc finger SWIM domain-containing protein 8 (1413 aa).

Ser-36, Ser-48, and Ser-53 each carry phosphoserine. Positions 45–65 (RKQSAGPNSPTGGGGGGGSGG) are disordered. Residues 55 to 65 (TGGGGGGGSGG) are compositionally biased toward gly residues. The segment at 172–208 (YNVAVMFDRCRVTSCSCTCGAGAKWCTHVVALCLFRI) adopts an SWIM-type zinc-finger fold. Residues 600-817 (ESQTHKPQTL…ESHAPHVPNQ (218 aa)) form a disordered region. Positions 604 to 625 (HKPQTLSSFYSSSRPATASQRS) are enriched in polar residues. Residues 704–715 (SRGGYNGRGWGS) are compositionally biased toward gly residues. Thr-724 carries the phosphothreonine modification. Residues 729–744 (IDSSAPETTSDSSPTL) show a composition bias toward polar residues. 3 positions are modified to phosphoserine: Ser-738, Ser-741, and Ser-745. The span at 759–794 (GRGQDSDSISSSSSDSLGSSSSSGSRRASASGGARA) shows a compositional bias: low complexity. Residues 795–811 (KTVEVGRYKGRRPESHA) are compositionally biased toward basic and acidic residues. 2 positions are modified to phosphoserine: Ser-852 and Ser-1412.

The protein belongs to the ZSWIM8 family. As to quaternary structure, component of the SCF-like E3 ubiquitin-protein ligase complex which contains CUL3, RBX1, ELOB, ELOC and ZSWIM8. Interacts with DAB1.

It is found in the cytoplasm. It localises to the cytosol. It functions in the pathway protein modification; protein ubiquitination. Substrate recognition component of a SCF-like E3 ubiquitin-protein ligase complex that promotes target-directed microRNA degradation (TDMD), a process that mediates degradation of microRNAs (miRNAs). The SCF-like E3 ubiquitin-protein ligase complex acts by catalyzing ubiquitination and subsequent degradation of AGO proteins (AGO1, AGO2, AGO3 and/or AGO4), thereby exposing miRNAs for degradation. Specifically recognizes and binds AGO proteins when they are engaged with a TDMD target. May also acts as a regulator of axon guidance: specifically recognizes misfolded ROBO3 and promotes its ubiquitination and subsequent degradation. Plays an essential role for proper embryonic development of heart and lung. Controls protein quality of DAB1, a key signal molecule for brain development, thus protecting its signaling strength. Mechanistically, recognizes intrinsically disordered regions of DAB1 and eliminates misfolded DAB1 that cannot be properly phosphorylated. The polypeptide is Zinc finger SWIM domain-containing protein 8 (Bos taurus (Bovine)).